Consider the following 394-residue polypeptide: Elongation factor Tu (394 aa).

Residues 10–204 (KPHINVGTIG…ALDNYIPEPK (195 aa)) form the tr-type G domain. Residues 19-26 (GHVDHGKT) form a G1 region. Position 19–26 (19–26 (GHVDHGKT)) interacts with GTP. Threonine 26 lines the Mg(2+) pocket. Residues 60–64 (GITIN) form a G2 region. The tract at residues 81–84 (DCPG) is G3. GTP contacts are provided by residues 81-85 (DCPGH) and 136-139 (NKCD). The segment at 136-139 (NKCD) is G4. The segment at 174–176 (SAL) is G5.

This sequence belongs to the TRAFAC class translation factor GTPase superfamily. Classic translation factor GTPase family. EF-Tu/EF-1A subfamily. Monomer.

Its subcellular location is the cytoplasm. It catalyses the reaction GTP + H2O = GDP + phosphate + H(+). Its function is as follows. GTP hydrolase that promotes the GTP-dependent binding of aminoacyl-tRNA to the A-site of ribosomes during protein biosynthesis. This Blochmanniella pennsylvanica (strain BPEN) protein is Elongation factor Tu.